We begin with the raw amino-acid sequence, 325 residues long: Phospho-N-acetylmuramoyl-pentapeptide-transferase (325 aa).

10 consecutive transmembrane segments (helical) span residues 3–23, 48–68, 79–99, 106–126, 136–156, 174–194, 199–219, 223–243, 246–266, and 298–318; these read LMIY…PILI, GTPT…VFVV, AIFA…LKII, LKAY…GFYA, IIVP…PFII, GLAT…SYAT, LAVF…YNAY, VFMG…VAMM, LPLI…SVIL, and IVSI…LSLI.

It belongs to the glycosyltransferase 4 family. MraY subfamily. It depends on Mg(2+) as a cofactor.

The protein resides in the cell membrane. The catalysed reaction is UDP-N-acetyl-alpha-D-muramoyl-L-alanyl-gamma-D-glutamyl-meso-2,6-diaminopimeloyl-D-alanyl-D-alanine + di-trans,octa-cis-undecaprenyl phosphate = di-trans,octa-cis-undecaprenyl diphospho-N-acetyl-alpha-D-muramoyl-L-alanyl-D-glutamyl-meso-2,6-diaminopimeloyl-D-alanyl-D-alanine + UMP. Its pathway is cell wall biogenesis; peptidoglycan biosynthesis. Catalyzes the initial step of the lipid cycle reactions in the biosynthesis of the cell wall peptidoglycan: transfers peptidoglycan precursor phospho-MurNAc-pentapeptide from UDP-MurNAc-pentapeptide onto the lipid carrier undecaprenyl phosphate, yielding undecaprenyl-pyrophosphoryl-MurNAc-pentapeptide, known as lipid I. This is Phospho-N-acetylmuramoyl-pentapeptide-transferase from Clostridium novyi (strain NT).